We begin with the raw amino-acid sequence, 177 residues long: Ribosome maturation factor RimM (177 aa).

Residues 101-174 enclose the PRC barrel domain; it reads EGEFHLLDLV…WLLLTPPPGL (74 aa).

It belongs to the RimM family. In terms of assembly, binds ribosomal protein uS19.

It is found in the cytoplasm. An accessory protein needed during the final step in the assembly of 30S ribosomal subunit, possibly for assembly of the head region. Essential for efficient processing of 16S rRNA. May be needed both before and after RbfA during the maturation of 16S rRNA. It has affinity for free ribosomal 30S subunits but not for 70S ribosomes. The chain is Ribosome maturation factor RimM from Synechococcus sp. (strain CC9605).